Reading from the N-terminus, the 167-residue chain is UPF0225 protein VV1_2912 (167 aa).

Belongs to the UPF0225 family.

This chain is UPF0225 protein VV1_2912, found in Vibrio vulnificus (strain CMCP6).